Consider the following 433-residue polypeptide: Signal recognition particle 54 kDa protein (433 aa).

GTP contacts are provided by residues 106–113 (GVEGSGKT), 186–190 (DTAGR), and 244–247 (TKMD).

The protein belongs to the GTP-binding SRP family. SRP54 subfamily. As to quaternary structure, part of the signal recognition particle protein translocation system, which is composed of SRP and FtsY. Archaeal SRP consists of a 7S RNA molecule of 300 nucleotides and two protein subunits: SRP54 and SRP19.

It is found in the cytoplasm. The enzyme catalyses GTP + H2O = GDP + phosphate + H(+). Functionally, involved in targeting and insertion of nascent membrane proteins into the cytoplasmic membrane. Binds to the hydrophobic signal sequence of the ribosome-nascent chain (RNC) as it emerges from the ribosomes. The SRP-RNC complex is then targeted to the cytoplasmic membrane where it interacts with the SRP receptor FtsY. The sequence is that of Signal recognition particle 54 kDa protein from Pyrobaculum neutrophilum (strain DSM 2338 / JCM 9278 / NBRC 100436 / V24Sta) (Thermoproteus neutrophilus).